The chain runs to 155 residues: MSSKLNALFSDSYVDVSQYRDQHFKGNRYEQEKLLKQANTLYVGNLSFYTTEEQVYELFSKSGDVKRIIIGLDKVKKTACGFCFVEYYTRTDAENAMRFVNGTRLDDRIIRTDWDAGFKEGRQYGRGKSGGQVRDEYRQDYDPARGGYGKVVSRP.

MRNA is bound by residues Tyr-19, Tyr-42, 111 to 115 (RTDWD), 122 to 126 (RQYGR), and 132 to 133 (QV). The RRM domain occupies 39–117 (NTLYVGNLSF…RIIRTDWDAG (79 aa)). Residues 122–155 (RQYGRGKSGGQVRDEYRQDYDPARGGYGKVVSRP) form a disordered region. The span at 133–143 (VRDEYRQDYDP) shows a compositional bias: basic and acidic residues.

This sequence belongs to the RRM NCBP2 family. Component of the nuclear cap-binding complex (CBC), a heterodimer composed of ncbp1/cbp80 and ncbp2/cbp20 that interacts with m7GpppG-capped RNA.

The protein localises to the nucleus. The protein resides in the cytoplasm. Functionally, component of the cap-binding complex (CBC), which binds co-transcriptionally to the 5' cap of pre-mRNAs and is involved in various processes such as pre-mRNA splicing, translation regulation, nonsense-mediated mRNA decay, RNA-mediated gene silencing (RNAi) by microRNAs (miRNAs) and mRNA export. The CBC complex is involved in mRNA export from the nucleus, leading to the recruitment of the mRNA export machinery to the 5' end of mRNA and to mRNA export in a 5' to 3' direction through the nuclear pore. The CBC complex is also involved in mediating U snRNA and intronless mRNAs export from the nucleus. The CBC complex is essential for a pioneer round of mRNA translation, before steady state translation when the CBC complex is replaced by cytoplasmic cap-binding protein eIF4E. The pioneer round of mRNA translation mediated by the CBC complex plays a central role in nonsense-mediated mRNA decay (NMD), NMD only taking place in mRNAs bound to the CBC complex, but not on eIF4E-bound mRNAs. The CBC complex enhances NMD in mRNAs containing at least one exon-junction complex (EJC), promoting the interaction between upf1 and upf2. The CBC complex is also involved in 'failsafe' NMD, which is independent of the EJC complex, while it does not participate in Staufen-mediated mRNA decay (SMD). During cell proliferation, the CBC complex is also involved in microRNAs (miRNAs) biogenesis via its interaction with srrt/ars2, thereby being required for miRNA-mediated RNA interference. The CBC complex also acts as a negative regulator of parn, thereby acting as an inhibitor of mRNA deadenylation. In the CBC complex, ncbp2/cbp20 recognizes and binds capped RNAs (m7GpppG-capped RNA) but requires ncbp1/cbp80 to stabilize the movement of its N-terminal loop and lock the CBC into a high affinity cap-binding state with the cap structure. The conventional cap-binding complex with NCBP2 binds both small nuclear RNA (snRNA) and messenger (mRNA) and is involved in their export from the nucleus. This Salmo salar (Atlantic salmon) protein is Nuclear cap-binding protein subunit 2 (ncbp2).